Reading from the N-terminus, the 423-residue chain is Site-specific recombinase Flp (423 aa).

Residues 136 to 422 (GNSHSKKMLK…DYLSSYINRR (287 aa)) form the Tyr recombinase Flp-type domain. Catalysis depends on tyrosine 343, which acts as the O-(3'-phospho-DNA)-tyrosine intermediate.

Belongs to the 'phage' integrase family. Homotetramer.

Functionally, part of the plasmid amplification system, which corrects any decrease in copy number caused by a rare missegregation event. Catalyzes the recombination between the large inverted repetitions of the 2-micron plasmid during plasmid replication. This recombination event changes the direction of one of the two replication forks in the bidirectionally replicating molecule, effectively resulting in multiple rounds of replication from a single initiation event. Binds specifically to the FLP recognition target (FRT) site where it induces DNA to bend. Three types of bend exist. Type I is approximately 60 degrees and results from 1 FLP molecule binding to 1 symmetry element. Type II is &gt;144 degrees and results from FLP molecules binding to symmetry elements a and b. Type III is approximately 65 degrees and results from FLP molecules binding to symmetry elements b and c. The sequence is that of Site-specific recombinase Flp (FLP1) from Saccharomyces cerevisiae (strain ATCC 204508 / S288c) (Baker's yeast).